The chain runs to 265 residues: Type III pantothenate kinase (265 aa).

6 to 13 (DVGNTHTV) serves as a coordination point for ATP. Residue 112–115 (GADR) participates in substrate binding. The active-site Proton acceptor is the Asp114. Position 134 (Asp134) interacts with K(+). An ATP-binding site is contributed by Thr137. Position 189 (Thr189) interacts with substrate.

This sequence belongs to the type III pantothenate kinase family. As to quaternary structure, homodimer. NH4(+) serves as cofactor. K(+) is required as a cofactor.

The protein resides in the cytoplasm. The catalysed reaction is (R)-pantothenate + ATP = (R)-4'-phosphopantothenate + ADP + H(+). The protein operates within cofactor biosynthesis; coenzyme A biosynthesis; CoA from (R)-pantothenate: step 1/5. Its function is as follows. Catalyzes the phosphorylation of pantothenate (Pan), the first step in CoA biosynthesis. This Streptomyces griseus subsp. griseus (strain JCM 4626 / CBS 651.72 / NBRC 13350 / KCC S-0626 / ISP 5235) protein is Type III pantothenate kinase.